Consider the following 181-residue polypeptide: UPF0302 protein ABC1905 (181 aa).

It belongs to the UPF0302 family.

The sequence is that of UPF0302 protein ABC1905 from Shouchella clausii (strain KSM-K16) (Alkalihalobacillus clausii).